A 504-amino-acid polypeptide reads, in one-letter code: Xylose import ATP-binding protein XylG (504 aa).

2 consecutive ABC transporter domains span residues 5–242 (LEMK…VGRE) and 259–500 (LRVE…VMEA). 37–44 (GENGSGKS) provides a ligand contact to ATP.

The protein belongs to the ABC transporter superfamily. Xylose importer (TC 3.A.1.2.4) family. In terms of assembly, the complex is composed of two ATP-binding proteins (XylG), two transmembrane proteins (XylH) and a solute-binding protein (XylF).

It localises to the cell inner membrane. It catalyses the reaction D-xylose(out) + ATP + H2O = D-xylose(in) + ADP + phosphate + H(+). Part of the ABC transporter complex XylFGH involved in xylose import. Responsible for energy coupling to the transport system. This is Xylose import ATP-binding protein XylG from Histophilus somni (strain 129Pt) (Haemophilus somnus).